The following is a 549-amino-acid chain: Glucose-6-phosphate isomerase (549 aa).

An N6-acetyllysine mark is found at lysine 80, lysine 228, and lysine 234. The Proton donor role is filled by glutamate 355. Catalysis depends on residues histidine 386 and lysine 514.

Belongs to the GPI family.

Its subcellular location is the cytoplasm. It carries out the reaction alpha-D-glucose 6-phosphate = beta-D-fructose 6-phosphate. Its pathway is carbohydrate biosynthesis; gluconeogenesis. It functions in the pathway carbohydrate degradation; glycolysis; D-glyceraldehyde 3-phosphate and glycerone phosphate from D-glucose: step 2/4. Catalyzes the reversible isomerization of glucose-6-phosphate to fructose-6-phosphate. The chain is Glucose-6-phosphate isomerase from Escherichia coli O139:H28 (strain E24377A / ETEC).